The chain runs to 460 residues: Argininosuccinate lyase (460 aa).

Belongs to the lyase 1 family. Argininosuccinate lyase subfamily.

It localises to the cytoplasm. The enzyme catalyses 2-(N(omega)-L-arginino)succinate = fumarate + L-arginine. Its pathway is amino-acid biosynthesis; L-arginine biosynthesis; L-arginine from L-ornithine and carbamoyl phosphate: step 3/3. This Lawsonia intracellularis (strain PHE/MN1-00) protein is Argininosuccinate lyase.